The following is a 926-amino-acid chain: Thyroid peroxidase (926 aa).

Residues 1–14 (MGARAVLGVTLAVA) form the signal peptide. The Extracellular portion of the chain corresponds to 19-844 (FFASILRRKD…TCVDAGRLPR (826 aa)). Residue Asn129 is glycosylated (N-linked (GlcNAc...) asparagine). A disulfide bridge links Cys142 with Cys158. Asp238 serves as a coordination point for heme b. The active-site Proton acceptor is His239. Asp240 is a binding site for Ca(2+). Intrachain disulfides connect Cys259/Cys269 and Cys263/Cys286. N-linked (GlcNAc...) asparagine glycosylation is found at Asn277 and Asn307. Residues Thr321, Phe323, Asp325, and Ser327 each coordinate Ca(2+). An N-linked (GlcNAc...) asparagine glycan is attached at Asn342. The heme b site is built by Glu398 and His493. Cystine bridges form between Cys596–Cys653, Cys694–Cys719, Cys740–Cys780, Cys766–Cys792, Cys798–Cys812, Cys806–Cys821, and Cys823–Cys836. One can recognise a Sushi domain in the interval 738–793 (DACGFPDPVEDGGFLLCEERGQRVLVFSCRHGFRLRGPAQITCTPRGWDSPPPLCK). Residues 794-837 (DINECEDETDPPCHASARCKNTKGGVLCECSDPLVLGEDGRTCV) form the EGF-like; calcium-binding domain. A helical membrane pass occupies residues 845-869 (ASVVSIALGAVLVCGLAGLAWTVVC). Residues 870–926 (RWTHADARPLLPVGEGEGDGKSPSLPLPGCGNRRDVGAAPALEVEQDLSCGSRGLCE) are Cytoplasmic-facing.

Belongs to the peroxidase family. XPO subfamily. Interacts with DUOX1, DUOX2 and CYBA. It depends on Ca(2+) as a cofactor. The cofactor is heme b. Heme is covalently bound through a H(2)O(2)-dependent autocatalytic process. Heme insertion is important for the delivery of protein at the cell surface. In terms of processing, cleaved in its N-terminal part. Post-translationally, N-glycosylated; contains mannose and N-acetylglucosamine.

It localises to the membrane. It carries out the reaction 2 iodide + H2O2 + 2 H(+) = diiodine + 2 H2O. It catalyses the reaction [thyroglobulin]-L-tyrosine + iodide + H2O2 + H(+) = [thyroglobulin]-3-iodo-L-tyrosine + 2 H2O. The catalysed reaction is [thyroglobulin]-3-iodo-L-tyrosine + iodide + H2O2 + H(+) = [thyroglobulin]-3,5-diiodo-L-tyrosine + 2 H2O. The enzyme catalyses 2 [thyroglobulin]-3,5-diiodo-L-tyrosine + H2O2 = [thyroglobulin]-L-thyroxine + [thyroglobulin]-dehydroalanine + 2 H2O. It carries out the reaction [thyroglobulin]-3-iodo-L-tyrosine + [thyroglobulin]-3,5-diiodo-L-tyrosine + H2O2 = [thyroglobulin]-3,3',5-triiodo-L-thyronine + [thyroglobulin]-dehydroalanine + 2 H2O. It functions in the pathway hormone biosynthesis; thyroid hormone biosynthesis. Functionally, iodination and coupling of the hormonogenic tyrosines in thyroglobulin to yield the thyroid hormones T(3) and T(4). This Sus scrofa (Pig) protein is Thyroid peroxidase (TPO).